The sequence spans 149 residues: MRAVVQRVTKASVSVDGKIVGQIEKGIVVLLGVGKDDNIDDTKYLAEKIVNLRIFDDNDGKMNLSLLDVQGSALIISQFTLYGDCRRGRRPSYSDSANPELAKELYEKFIELVRGYGVHVETGIFAAYMQVEIHNDGPVTLLLDSKKVF.

Positions 137-138 (GP) match the Gly-cisPro motif, important for rejection of L-amino acids motif.

The protein belongs to the DTD family. In terms of assembly, homodimer.

The protein localises to the cytoplasm. The catalysed reaction is glycyl-tRNA(Ala) + H2O = tRNA(Ala) + glycine + H(+). It carries out the reaction a D-aminoacyl-tRNA + H2O = a tRNA + a D-alpha-amino acid + H(+). Functionally, an aminoacyl-tRNA editing enzyme that deacylates mischarged D-aminoacyl-tRNAs. Also deacylates mischarged glycyl-tRNA(Ala), protecting cells against glycine mischarging by AlaRS. Acts via tRNA-based rather than protein-based catalysis; rejects L-amino acids rather than detecting D-amino acids in the active site. By recycling D-aminoacyl-tRNA to D-amino acids and free tRNA molecules, this enzyme counteracts the toxicity associated with the formation of D-aminoacyl-tRNA entities in vivo and helps enforce protein L-homochirality. The chain is D-aminoacyl-tRNA deacylase from Fervidobacterium nodosum (strain ATCC 35602 / DSM 5306 / Rt17-B1).